Consider the following 165-residue polypeptide: Destrin (165 aa).

Ala2 carries the N-acetylalanine modification. Ser3 bears the Phosphoserine mark. In terms of domain architecture, ADF-H spans 4–153 (GVQVADEVCR…NRTCIAEKLG (150 aa)). Lys19 bears the N6-acetyllysine mark. The Nuclear localization signal motif lies at 30-34 (KKRKK).

Belongs to the actin-binding proteins ADF family. Post-translationally, ISGylated. As to expression, widely expressed. Not found in skeletal muscle.

Actin-depolymerizing protein. Severs actin filaments (F-actin) and binds to actin monomers (G-actin). Acts in a pH-independent manner. This Mus musculus (Mouse) protein is Destrin (Dstn).